We begin with the raw amino-acid sequence, 349 residues long: Phenylalanine--tRNA ligase alpha subunit (349 aa).

E258 contacts Mg(2+).

The protein belongs to the class-II aminoacyl-tRNA synthetase family. Phe-tRNA synthetase alpha subunit type 1 subfamily. In terms of assembly, tetramer of two alpha and two beta subunits. Requires Mg(2+) as cofactor.

It is found in the cytoplasm. The enzyme catalyses tRNA(Phe) + L-phenylalanine + ATP = L-phenylalanyl-tRNA(Phe) + AMP + diphosphate + H(+). This Rickettsia akari (strain Hartford) protein is Phenylalanine--tRNA ligase alpha subunit.